The following is a 226-amino-acid chain: Ribonuclease HII (226 aa).

The region spanning Gln24–Val216 is the RNase H type-2 domain. The a divalent metal cation site is built by Asp30, Glu31, and Asp125.

This sequence belongs to the RNase HII family. Requires Mn(2+) as cofactor. The cofactor is Mg(2+).

The protein resides in the cytoplasm. The enzyme catalyses Endonucleolytic cleavage to 5'-phosphomonoester.. Endonuclease that specifically degrades the RNA of RNA-DNA hybrids. This chain is Ribonuclease HII, found in Cupriavidus metallidurans (strain ATCC 43123 / DSM 2839 / NBRC 102507 / CH34) (Ralstonia metallidurans).